We begin with the raw amino-acid sequence, 64 residues long: Translational regulator CsrA (64 aa).

It belongs to the CsrA/RsmA family. As to quaternary structure, homodimer; the beta-strands of each monomer intercalate to form a hydrophobic core, while the alpha-helices form wings that extend away from the core.

The protein resides in the cytoplasm. Functionally, a key translational regulator that binds mRNA to regulate translation initiation and/or mRNA stability. Mediates global changes in gene expression, shifting from rapid growth to stress survival by linking envelope stress, the stringent response and the catabolite repression systems. Usually binds in the 5'-UTR; binding at or near the Shine-Dalgarno sequence prevents ribosome-binding, repressing translation, binding elsewhere in the 5'-UTR can activate translation and/or stabilize the mRNA. Its function is antagonized by small RNA(s). The protein is Translational regulator CsrA of Methylococcus capsulatus (strain ATCC 33009 / NCIMB 11132 / Bath).